The primary structure comprises 425 residues: Aromatic prenyl transferase ptmE (425 aa).

L-tryptophan is bound by residues 83-84 (GI) and Glu-92. Substrate-binding residues include Arg-107, Lys-198, Tyr-200, Arg-265, Lys-267, Tyr-269, Tyr-345, Tyr-410, and Tyr-414.

The protein belongs to the tryptophan dimethylallyltransferase family. As to quaternary structure, homodimer.

It functions in the pathway secondary metabolite biosynthesis. Its function is as follows. Aromatic prenyl transferase; part of the gene cluster that mediates the biosynthesis of the indole diterpenes penitrems. The geranylgeranyl diphosphate (GGPP) synthase ptmG catalyzes the first step in penitrem biosynthesis via conversion of farnesyl pyrophosphate and isopentyl pyrophosphate into geranylgeranyl pyrophosphate (GGPP). Condensation of indole-3-glycerol phosphate with GGPP by the prenyl transferase ptmC then forms 3-geranylgeranylindole (3-GGI). Epoxidation by the FAD-dependent monooxygenase ptmM leads to a epoxidized-GGI that is substrate of the terpene cyclase ptmB for cyclization to yield paspaline. Paspaline is subsequently converted to 13-desoxypaxilline by the cytochrome P450 monooxygenase ptmP, the latter being then converted to paxilline by the cytochrome P450 monooxygenase ptmQ. Paxilline is converted to beta-paxitriol via C-10 ketoreduction by the short-chain dehydrogenase ptmH which can be monoprenylated at the C-20 by the indole diterpene prenyltransferase ptmD. A two-step elimination (acetylation and elimination) process performed by the O-acetyltransferase ptmV and ptmI leads to the production of the prenylated form of penijanthine. The FAD-linked oxidoreductase ptmO then converts the prenylated form of penijanthine into PC-M5 which is in turn transformed into PC-M4 by the aromatic dimethylallyltransferase ptmE. Five sequential oxidative transformations performed by the cytochrome P450 monooxygenases ptmK, ptmU, ptmL, ptmN and ptmJ yield the various penitrem compounds. PtmK, ptmU and ptmM are involved in the formation of the key bicyclic ring of penitrem C via the formation of the intermediates secopenitrem D and penitrem D. PtmL catalyzes the epoxidation of penitrem D and C to yield penitrem B and F, respectively. PtmJ catalyzes the last benzylic hydroxylation to convert penitrem B to prenitrem E and penitrem F to penitrem A. In Penicillium ochrochloron, this protein is Aromatic prenyl transferase ptmE.